Here is a 450-residue protein sequence, read N- to C-terminus: NAD-specific glutamate dehydrogenase (450 aa).

Substrate-binding residues include K90, Q111, and K114. K126 serves as the catalytic Proton donor. G165 provides a ligand contact to substrate. T210 and N241 together coordinate NAD(+). S381 is a substrate binding site.

It belongs to the Glu/Leu/Phe/Val dehydrogenases family. As to quaternary structure, homohexamer.

It catalyses the reaction L-glutamate + NAD(+) + H2O = 2-oxoglutarate + NH4(+) + NADH + H(+). It functions in the pathway amino-acid degradation; L-glutamate degradation via hydroxyglutarate pathway; crotonoyl-CoA from L-glutamate: step 1/5. This Clostridium symbiosum (Bacteroides symbiosus) protein is NAD-specific glutamate dehydrogenase (gdh).